Here is a 367-residue protein sequence, read N- to C-terminus: Peptide chain release factor 2 (367 aa).

Q254 is subject to N5-methylglutamine.

This sequence belongs to the prokaryotic/mitochondrial release factor family. Methylated by PrmC. Methylation increases the termination efficiency of RF2.

Its subcellular location is the cytoplasm. In terms of biological role, peptide chain release factor 2 directs the termination of translation in response to the peptide chain termination codons UGA and UAA. This chain is Peptide chain release factor 2, found in Neisseria meningitidis serogroup C / serotype 2a (strain ATCC 700532 / DSM 15464 / FAM18).